The sequence spans 2290 residues: Protein Ycf2 (2290 aa).

1644 to 1651 provides a ligand contact to ATP; sequence GSIGTGRS.

This sequence belongs to the Ycf2 family.

It localises to the plastid. Its subcellular location is the chloroplast stroma. Functionally, probable ATPase of unknown function. Its presence in a non-photosynthetic plant (Epifagus virginiana) and experiments in tobacco indicate that it has an essential function which is probably not related to photosynthesis. This is Protein Ycf2 from Barbarea verna (Land cress).